The sequence spans 308 residues: Cell division protein FtsX (308 aa).

The Cytoplasmic portion of the chain corresponds to 1-24; the sequence is MISRFFRHLFEALKSLKRNGWMTV. The helical transmembrane segment at 25-45 threads the bilayer; it reads AAVSSVMITLTLVAIFASVIF. Residues 46–178 are Extracellular-facing; it reads NTAKLATDIE…NTERLFKLAS (133 aa). A helical transmembrane segment spans residues 179 to 199; the sequence is FIRVWGLGIAALLIFIAVFLI. At 200–236 the chain is on the cytoplasmic side; it reads SNTIRITIISRSREIQIMRLVGAKNSYIRGPFLLEGA. The helical transmembrane segment at 237–257 threads the bilayer; it reads FIGLLGAIAPSVLVFIVYQIV. Topologically, residues 258–276 are extracellular; sequence YQSVNKSLVGQNLSMISPD. A helical transmembrane segment spans residues 277–297; sequence LFSPLMIALLFVIGVFIGSLG. Topologically, residues 298–308 are cytoplasmic; it reads SGISMRRFLKI.

It belongs to the ABC-4 integral membrane protein family. FtsX subfamily. Homodimer. Interacts with FtsE; forms a membrane-associated complex. Interacts (via large extracellular loop) with PcsB (via N-terminal coiled-coil domain). This interaction directs PcsB to equatorial and septal sites of dividing cells.

It localises to the cell membrane. In terms of biological role, part of the ABC transporter FtsEX involved in asymmetric cellular division facilitating the initiation of sporulation. Required in maintaining normal growth and cellular morphology. The protein is Cell division protein FtsX of Streptococcus pneumoniae serotype 2 (strain D39 / NCTC 7466).